The sequence spans 127 residues: Glycine cleavage system H protein 1 (127 aa).

The Lipoyl-binding domain maps to 20 to 101 (SVTVGITAYA…MGEGWFFRFI (82 aa)). The residue at position 60 (K60) is an N6-lipoyllysine.

The protein belongs to the GcvH family. In terms of assembly, the glycine cleavage system is composed of four proteins: P, T, L and H. (R)-lipoate is required as a cofactor.

Functionally, the glycine cleavage system catalyzes the degradation of glycine. The H protein shuttles the methylamine group of glycine from the P protein to the T protein. The protein is Glycine cleavage system H protein 1 of Pseudomonas putida (strain ATCC 47054 / DSM 6125 / CFBP 8728 / NCIMB 11950 / KT2440).